A 340-amino-acid chain; its full sequence is NADH-quinone oxidoreductase subunit H 2 (340 aa).

8 consecutive transmembrane segments (helical) span residues 10-30, 84-104, 126-146, 172-192, 198-218, 255-275, 279-299, and 318-338; these read LIVAFGLIVFKVALLIAILLL, FLFKLAPILALAPPFVVFVAI, VALLFVFAVIGIEVFGVIFGG, MGFAVIGVVMLAQSMSLLDIV, VWNIVYQPVGFFVFFVAGLAE, VIVLLVSVLLVILFFGGWNGI, MPPLLWFLLKVAFFVYLFIWF, and VLLPLSMANIIITGVLLGAAA.

It belongs to the complex I subunit 1 family. NDH-1 is composed of 14 different subunits. Subunits NuoA, H, J, K, L, M, N constitute the membrane sector of the complex.

Its subcellular location is the cell inner membrane. It catalyses the reaction a quinone + NADH + 5 H(+)(in) = a quinol + NAD(+) + 4 H(+)(out). In terms of biological role, NDH-1 shuttles electrons from NADH, via FMN and iron-sulfur (Fe-S) centers, to quinones in the respiratory chain. The immediate electron acceptor for the enzyme in this species is believed to be ubiquinone. Couples the redox reaction to proton translocation (for every two electrons transferred, four hydrogen ions are translocated across the cytoplasmic membrane), and thus conserves the redox energy in a proton gradient. This subunit may bind ubiquinone. The polypeptide is NADH-quinone oxidoreductase subunit H 2 (Rhizobium etli (strain ATCC 51251 / DSM 11541 / JCM 21823 / NBRC 15573 / CFN 42)).